A 118-amino-acid polypeptide reads, in one-letter code: Large ribosomal subunit protein bL20 (118 aa).

The protein belongs to the bacterial ribosomal protein bL20 family.

Binds directly to 23S ribosomal RNA and is necessary for the in vitro assembly process of the 50S ribosomal subunit. It is not involved in the protein synthesizing functions of that subunit. The sequence is that of Large ribosomal subunit protein bL20 from Thermotoga petrophila (strain ATCC BAA-488 / DSM 13995 / JCM 10881 / RKU-1).